The sequence spans 409 residues: Glycinol 4-dimethylallyltransferase (409 aa).

Residues methionine 1–arginine 44 constitute a chloroplast transit peptide. 9 consecutive transmembrane segments (helical) span residues leucine 113–phenylalanine 133, leucine 148–leucine 168, valine 200–tryptophan 220, leucine 222–leucine 242, proline 249–phenylalanine 269, leucine 287–isoleucine 307, alanine 330–alanine 350, histidine 354–tyrosine 374, and glycine 388–isoleucine 408.

It belongs to the UbiA prenyltransferase family. It depends on Mg(2+) as a cofactor. The cofactor is Mn(2+). Requires Co(2+) as cofactor.

The protein localises to the plastid. Its subcellular location is the chloroplast membrane. The enzyme catalyses (6aS,11aS)-3,6a,9-trihydroxypterocarpan + dimethylallyl diphosphate = (6aS,11aS)-2-dimethylallyl-3,6a,9-trihydroxypterocarpan + diphosphate. The catalysed reaction is (6aS,11aS)-3,6a,9-trihydroxypterocarpan + dimethylallyl diphosphate = (6aS,11aS)-4-dimethylallyl-3,6a,9-trihydroxypterocarpan + diphosphate. Its pathway is phytoalexin biosynthesis; pterocarpan phytoalexin biosynthesis. In terms of biological role, proposed to be involved in the biosynthesis of pterocarpan phytoalexins, specifically glyceollins. Can act as a prenyltransferase towards glycinol which is the direct precursor of glyceollins. Seems to be specific for prenylation at C-4 thus producing glyceollin I. This chain is Glycinol 4-dimethylallyltransferase (G4DT), found in Glycine max (Soybean).